Consider the following 422-residue polypeptide: UDP-N-acetylglucosamine 1-carboxyvinyltransferase (422 aa).

Phosphoenolpyruvate is bound at residue 23–24 (KN). Arg-92 lines the UDP-N-acetyl-alpha-D-glucosamine pocket. Cys-116 acts as the Proton donor in catalysis. Cys-116 bears the 2-(S-cysteinyl)pyruvic acid O-phosphothioketal mark. UDP-N-acetyl-alpha-D-glucosamine contacts are provided by residues 121 to 125 (RPVDL), 161 to 164 (KVSV), Asp-306, and Ile-328.

Belongs to the EPSP synthase family. MurA subfamily.

It is found in the cytoplasm. The catalysed reaction is phosphoenolpyruvate + UDP-N-acetyl-alpha-D-glucosamine = UDP-N-acetyl-3-O-(1-carboxyvinyl)-alpha-D-glucosamine + phosphate. It functions in the pathway cell wall biogenesis; peptidoglycan biosynthesis. Cell wall formation. Adds enolpyruvyl to UDP-N-acetylglucosamine. The sequence is that of UDP-N-acetylglucosamine 1-carboxyvinyltransferase from Aliivibrio salmonicida (strain LFI1238) (Vibrio salmonicida (strain LFI1238)).